A 318-amino-acid polypeptide reads, in one-letter code: Transaldolase (318 aa).

Lysine 132 (schiff-base intermediate with substrate) is an active-site residue.

This sequence belongs to the transaldolase family. Type 1 subfamily. Homodimer.

The protein resides in the cytoplasm. It catalyses the reaction D-sedoheptulose 7-phosphate + D-glyceraldehyde 3-phosphate = D-erythrose 4-phosphate + beta-D-fructose 6-phosphate. The protein operates within carbohydrate degradation; pentose phosphate pathway; D-glyceraldehyde 3-phosphate and beta-D-fructose 6-phosphate from D-ribose 5-phosphate and D-xylulose 5-phosphate (non-oxidative stage): step 2/3. Transaldolase is important for the balance of metabolites in the pentose-phosphate pathway. This Shewanella loihica (strain ATCC BAA-1088 / PV-4) protein is Transaldolase.